A 475-amino-acid polypeptide reads, in one-letter code: UDP-glycosyltransferase 1 (475 aa).

The Proton acceptor role is filled by H15. Residue H15 participates in an anthocyanidin binding. Residue D117 is the Charge relay of the active site. 7 residues coordinate UDP-alpha-D-glucose: A345, Q347, H362, W365, N366, S367, and E370. Residue G385 coordinates an anthocyanidin. UDP-alpha-D-glucose contacts are provided by E386 and Q387.

This sequence belongs to the UDP-glycosyltransferase family. As to expression, mostly expressed in leaves and flowers, and, to a lower extent, in roots and stems.

It catalyses the reaction (20S)-protopanaxadiol + UDP-alpha-D-glucose = (20S)-ginsenoside C-K + UDP + H(+). The enzyme catalyses (20S)-ginsenoside Rg3 + UDP-alpha-D-glucose = (20S)-ginsenoside Rd + UDP + H(+). The catalysed reaction is (20S)-ginsenoside Rh2 + UDP-alpha-D-glucose = (20S)-ginsenoside F2 + UDP + H(+). It carries out the reaction (20S)-protopanaxatriol + UDP-alpha-D-glucose = (20S)-ginsenoside F1 + UDP + H(+). It catalyses the reaction dammarenediol-II + UDP-alpha-D-glucose = (20S)-20-O-(beta-D-glucosyl)-3-hydroxydammarene + UDP + H(+). It participates in secondary metabolite biosynthesis; terpenoid biosynthesis. Component of the dammarane-type triterpene saponins (e.g. ginsenosides or panaxosides) biosynthetic pathway. Glycosyltransferase that catalyzes the biosynthesis of ginsenoside F1 from protopanaxatriol (PPT). Triggers C20-OH glycosylation of ginsenoside Rg3 to produce ginsenoside Rd. Mediates the conversion of protopanaxadiol (PPD) to the ginsenoside compound K. catalyzes the production of 20S-O-beta-(D-glucosyl)-dammarenediol II form dammarenediol II (DM). This Panax ginseng (Korean ginseng) protein is UDP-glycosyltransferase 1.